The chain runs to 853 residues: DNA mismatch repair protein MutS (853 aa).

An ATP-binding site is contributed by 614–621; sequence GPNMGGKS.

It belongs to the DNA mismatch repair MutS family.

Its function is as follows. This protein is involved in the repair of mismatches in DNA. It is possible that it carries out the mismatch recognition step. This protein has a weak ATPase activity. The chain is DNA mismatch repair protein MutS from Escherichia coli O81 (strain ED1a).